A 359-amino-acid polypeptide reads, in one-letter code: Molybdenum import ATP-binding protein ModC (359 aa).

Residues 1–229 (MLELNFSQQL…SALRPWLQRE (229 aa)) enclose the ABC transporter domain. Residue 31–38 (GLSGAGKT) participates in ATP binding. The Mop domain maps to 289–354 (SSSIRNILPV…IKSVSFNRQN (66 aa)).

This sequence belongs to the ABC transporter superfamily. Molybdate importer (TC 3.A.1.8) family. In terms of assembly, the complex is composed of two ATP-binding proteins (ModC), two transmembrane proteins (ModB) and a solute-binding protein (ModA).

The protein resides in the cell inner membrane. It carries out the reaction molybdate(out) + ATP + H2O = molybdate(in) + ADP + phosphate + H(+). Part of the ABC transporter complex ModABC involved in molybdenum import. Responsible for energy coupling to the transport system. In Yersinia pseudotuberculosis serotype I (strain IP32953), this protein is Molybdenum import ATP-binding protein ModC.